The sequence spans 281 residues: Putative glutamine amidotransferase-like protein RP404 (281 aa).

One can recognise a Glutamine amidotransferase type-1 domain in the interval 19-281; it reads KYTYADFPWY…KALVKASKYI (263 aa). Residues 139–174 enclose the RPE1 insert domain; it reads RHFSKLTYSKKFECNTEAFATTVYTLPIKLEFENAP.

This chain is Putative glutamine amidotransferase-like protein RP404, found in Rickettsia prowazekii (strain Madrid E).